The sequence spans 471 residues: Adenosylhomocysteinase (471 aa).

Substrate is bound by residues T60, D135, and E196. T197–T199 is a binding site for NAD(+). Residues K226 and D230 each contribute to the substrate site. NAD(+) contacts are provided by residues N231, G260–G265, E283, N318, I339–H341, and N387.

The protein belongs to the adenosylhomocysteinase family. NAD(+) is required as a cofactor.

Its subcellular location is the cytoplasm. The catalysed reaction is S-adenosyl-L-homocysteine + H2O = L-homocysteine + adenosine. Its pathway is amino-acid biosynthesis; L-homocysteine biosynthesis; L-homocysteine from S-adenosyl-L-homocysteine: step 1/1. Functionally, may play a key role in the regulation of the intracellular concentration of adenosylhomocysteine. The protein is Adenosylhomocysteinase of Chlorobium limicola (strain DSM 245 / NBRC 103803 / 6330).